We begin with the raw amino-acid sequence, 153 residues long: Ribosomal RNA large subunit methyltransferase H (153 aa).

Residues Leu-70, Gly-102, and 121 to 126 (LSRMTF) contribute to the S-adenosyl-L-methionine site.

The protein belongs to the RNA methyltransferase RlmH family. In terms of assembly, homodimer.

The protein resides in the cytoplasm. It catalyses the reaction pseudouridine(1915) in 23S rRNA + S-adenosyl-L-methionine = N(3)-methylpseudouridine(1915) in 23S rRNA + S-adenosyl-L-homocysteine + H(+). In terms of biological role, specifically methylates the pseudouridine at position 1915 (m3Psi1915) in 23S rRNA. The sequence is that of Ribosomal RNA large subunit methyltransferase H from Geobacter sulfurreducens (strain ATCC 51573 / DSM 12127 / PCA).